A 497-amino-acid chain; its full sequence is Acetyl-coenzyme A carboxylase carboxyl transferase subunit beta, chloroplastic (497 aa).

Residues 225–497 (LWVQCENCYG…LHGFLPLNQD (273 aa)) form the CoA carboxyltransferase N-terminal domain. Zn(2+) is bound by residues Cys229, Cys232, Cys248, and Cys251. The C4-type zinc-finger motif lies at 229–251 (CENCYGLNYKKFFSSKMNICEYC).

This sequence belongs to the AccD/PCCB family. Acetyl-CoA carboxylase is a heterohexamer composed of biotin carboxyl carrier protein, biotin carboxylase and 2 subunits each of ACCase subunit alpha and ACCase plastid-coded subunit beta (accD). It depends on Zn(2+) as a cofactor.

Its subcellular location is the plastid. It is found in the chloroplast stroma. It carries out the reaction N(6)-carboxybiotinyl-L-lysyl-[protein] + acetyl-CoA = N(6)-biotinyl-L-lysyl-[protein] + malonyl-CoA. It functions in the pathway lipid metabolism; malonyl-CoA biosynthesis; malonyl-CoA from acetyl-CoA: step 1/1. Functionally, component of the acetyl coenzyme A carboxylase (ACC) complex. Biotin carboxylase (BC) catalyzes the carboxylation of biotin on its carrier protein (BCCP) and then the CO(2) group is transferred by the transcarboxylase to acetyl-CoA to form malonyl-CoA. The protein is Acetyl-coenzyme A carboxylase carboxyl transferase subunit beta, chloroplastic of Phalaenopsis aphrodite subsp. formosana (Moth orchid).